We begin with the raw amino-acid sequence, 509 residues long: L-aspartate semialdehyde sulfurtransferase (509 aa).

Cysteine 133 functions as the Cysteine persulfide intermediate in the catalytic mechanism. 2 consecutive CBS domains span residues 394–450 (LSKP…NKKT) and 455–509 (MTRN…GGKK). Residues serine 395, isoleucine 399, and histidine 421 each coordinate S-methyl-5'-thioadenosine. S-adenosyl-L-methionine is bound by residues aspartate 439, threonine 456, isoleucine 460, and 479 to 482 (NISG). 497 to 500 (TSED) contacts S-methyl-5'-thioadenosine.

Belongs to the L-aspartate semialdehyde sulfurtransferase family. In terms of assembly, homodimer. May form a complex with MJ0099.

It carries out the reaction L-aspartate 4-semialdehyde + reduced 2[4Fe-4S]-[ferredoxin] + hydrogen sulfide + 3 H(+) = oxidized 2[4Fe-4S]-[ferredoxin] + L-homocysteine + H2O. It participates in amino-acid biosynthesis. The ligand-induced conformational reorganization of the protein could be an important regulatory mechanism. Required for O-acetylhomoserine sulfhydrylase (OAHS)-independent homocysteine (Hcy) biosynthesis. Together with MJ0099, catalyzes the condensation of sulfide with aspartate semialdehyde to generate homocysteine. Likely functions through persulfide intermediate. This Methanocaldococcus jannaschii (strain ATCC 43067 / DSM 2661 / JAL-1 / JCM 10045 / NBRC 100440) (Methanococcus jannaschii) protein is L-aspartate semialdehyde sulfurtransferase.